The primary structure comprises 118 residues: Small ribosomal subunit protein uS13 (118 aa).

The interval 94 to 118 (GLPLRGQRTRTNARTRKGPRKAIRK) is disordered.

The protein belongs to the universal ribosomal protein uS13 family. In terms of assembly, part of the 30S ribosomal subunit. Forms a loose heterodimer with protein S19. Forms two bridges to the 50S subunit in the 70S ribosome.

Its function is as follows. Located at the top of the head of the 30S subunit, it contacts several helices of the 16S rRNA. In the 70S ribosome it contacts the 23S rRNA (bridge B1a) and protein L5 of the 50S subunit (bridge B1b), connecting the 2 subunits; these bridges are implicated in subunit movement. Contacts the tRNAs in the A and P-sites. The sequence is that of Small ribosomal subunit protein uS13 from Stenotrophomonas maltophilia (strain R551-3).